We begin with the raw amino-acid sequence, 906 residues long: Protein translocase subunit SecA (906 aa).

Residues glutamine 89, 107–111 (GEGKT), and aspartate 502 each bind ATP. The disordered stretch occupies residues 868-887 (VPPAQRDPADPRTWGKVSRN). 4 residues coordinate Zn(2+): cysteine 890, cysteine 892, cysteine 901, and histidine 902.

The protein belongs to the SecA family. As to quaternary structure, monomer and homodimer. Part of the essential Sec protein translocation apparatus which comprises SecA, SecYEG and auxiliary proteins SecDF-YajC and YidC. Zn(2+) is required as a cofactor.

It is found in the cell inner membrane. The protein resides in the cytoplasm. The catalysed reaction is ATP + H2O + cellular proteinSide 1 = ADP + phosphate + cellular proteinSide 2.. In terms of biological role, part of the Sec protein translocase complex. Interacts with the SecYEG preprotein conducting channel. Has a central role in coupling the hydrolysis of ATP to the transfer of proteins into and across the cell membrane, serving both as a receptor for the preprotein-SecB complex and as an ATP-driven molecular motor driving the stepwise translocation of polypeptide chains across the membrane. This Brucella abortus (strain S19) protein is Protein translocase subunit SecA.